The primary structure comprises 387 residues: Adaptive-response sensory kinase SasA (387 aa).

An interacts with KaiC region spans residues 1–97 (MGESLSPQAL…TDQLANQLPQ (97 aa)). Positions 158 to 382 (LVAHDLRNPL…TFHFTMPVYR (225 aa)) constitute a Histidine kinase domain. His-161 bears the Phosphohistidine; by autocatalysis mark.

In terms of assembly, homooligomerizes. Part of the circadian clock (KaiA, KaiB, KaiC, CikA, RpaA, SasA), the composition of which varies during the circadian cycle. Binds to the CI domain of KaiC; KaiB(fs) and SasA compete for the binding site. Binds preferentially to doubly phosphorylated KaiC. Interacts with LdpA. Autophosphorylates in vitro.

It carries out the reaction ATP + protein L-histidine = ADP + protein N-phospho-L-histidine.. In terms of biological role, member of the two-component regulatory system SasA/RpaA involved in genome-wide circadian gene expression. One of three clock output pathways. Participates in the KaiABC clock protein complex, which constitutes the main circadian regulator in cyanobacteria, via its interaction with KaiC. Required for robustness of the circadian rhythm of gene expression and involved in clock output. KaiC enhances the autophosphorylation activity of SasA, which then transfers its phosphate group to RpaA to activate it. Phosphotransfer is maximal when KaiC phosphorylation is active during the circadian cycle; this two-component system is activated by fully phosphorylated KaiC. A very robust clock is reconstituted with KaiA, KaiB, KaiC, SasA, CikA and RpaA; output is measured by transcription from an appropriate reporter. In addition to its output function, recruits fold-shifted KaiB (KaiB(fs)) to KaiC to cooperatively form the KaiB(6):KaiC(6) complex (independent of SasA kinase activity); at physiological concentrations increases their association. At higher concentrations SasA and KaiB(fs) compete to bind to KaiC. Mutations that decrease cooperativity nearly phenocopy a deletion mutation. Functionally, autophosphorylation and phosphotransfer activities are not essential for clock rhythms in continuous light, but they are essential for adaptation to light/dark cycles. The sequence is that of Adaptive-response sensory kinase SasA from Synechococcus elongatus (strain ATCC 33912 / PCC 7942 / FACHB-805) (Anacystis nidulans R2).